The primary structure comprises 252 residues: MRAKKRFGQNFLIDQNIINKIVDSSEVENRNIIEIGPGKGALTKILVKKANKVLAYEIDQDMVNILNQQISSKNFVLINKDFLKEEFDKSQNYNIVANIPYYITSDIIFKIIENHQIFDQATLMVQKEVALRILAKQNDSEFSKLSLSVQFFFDVFLICDVSKNSFRPIPKVDSAVIKLVKKKNKDFSLWKEYFEFLKIAFSSRRKTLLNNLKYFFNEQKILKFFELKNYDPKVRAQNIKNEDFYALFLELR.

Residues N10, L12, G36, E57, D81, and N98 each coordinate S-adenosyl-L-methionine.

Belongs to the class I-like SAM-binding methyltransferase superfamily. rRNA adenine N(6)-methyltransferase family. RsmA subfamily.

The protein localises to the cytoplasm. The catalysed reaction is adenosine(1518)/adenosine(1519) in 16S rRNA + 4 S-adenosyl-L-methionine = N(6)-dimethyladenosine(1518)/N(6)-dimethyladenosine(1519) in 16S rRNA + 4 S-adenosyl-L-homocysteine + 4 H(+). Specifically dimethylates two adjacent adenosines (A1518 and A1519) in the loop of a conserved hairpin near the 3'-end of 16S rRNA in the 30S particle. May play a critical role in biogenesis of 30S subunits. The chain is Ribosomal RNA small subunit methyltransferase A from Mycoplasmopsis pulmonis (strain UAB CTIP) (Mycoplasma pulmonis).